Reading from the N-terminus, the 445-residue chain is UPF0210 protein SUB1511 (445 aa).

This sequence belongs to the UPF0210 family. As to quaternary structure, homodimer.

This chain is UPF0210 protein SUB1511, found in Streptococcus uberis (strain ATCC BAA-854 / 0140J).